A 901-amino-acid polypeptide reads, in one-letter code: Aconitate hydratase A (901 aa).

[4Fe-4S] cluster-binding residues include cysteine 443, cysteine 509, and cysteine 512.

This sequence belongs to the aconitase/IPM isomerase family. Monomer. It depends on [4Fe-4S] cluster as a cofactor.

It catalyses the reaction citrate = D-threo-isocitrate. The catalysed reaction is (2S,3R)-3-hydroxybutane-1,2,3-tricarboxylate = 2-methyl-cis-aconitate + H2O. The protein operates within carbohydrate metabolism; tricarboxylic acid cycle; isocitrate from oxaloacetate: step 2/2. Its pathway is organic acid metabolism; propanoate degradation. Functionally, involved in the catabolism of short chain fatty acids (SCFA) via the tricarboxylic acid (TCA)(acetyl degradation route) and probably the 2-methylcitrate cycle I (propionate degradation route). Catalyzes the reversible isomerization of citrate to isocitrate via cis-aconitate. Could catalyze the hydration of 2-methyl-cis-aconitate to yield (2R,3S)-2-methylisocitrate. The apo form of AcnA functions as a RNA-binding regulatory protein. This Staphylococcus aureus (strain MRSA252) protein is Aconitate hydratase A (acnA).